The primary structure comprises 422 residues: BTB/POZ domain-containing protein KCTD18 (422 aa).

The 69-residue stretch at aspartate 12–threonine 80 folds into the BTB domain. Disordered stretches follow at residues valine 289 to proline 357 and leucine 376 to lysine 422. Over residues proline 396–alanine 406 the composition is skewed to pro residues. Positions tryptophan 413–lysine 422 are enriched in polar residues.

In Bos taurus (Bovine), this protein is BTB/POZ domain-containing protein KCTD18 (KCTD18).